We begin with the raw amino-acid sequence, 1085 residues long: Solute carrier family 12 member 4 (1085 aa).

At 1–119 the chain is on the cytoplasmic side; the sequence is MPHFTVVPVD…RRAAEAPSMG (119 aa). Ser-24, Ser-47, Ser-51, Ser-81, and Ser-88 each carry phosphoserine. The chain crosses the membrane as a discontinuously helical span at residues 120–141; sequence TLMGVYLPCLQNIFGVILFLRL. K(+) contacts are provided by Asn-131 and Ile-132. Topologically, residues 142 to 149 are extracellular; that stretch reads TWMVGTAG. Residues 150-172 form a helical membrane-spanning segment; that stretch reads VLQALLIVLICCCCTLLTAISMS. The Cytoplasmic portion of the chain corresponds to 173 to 196; the sequence is AIATNGVVPAGGSYFMISRSLGPE. Residues 197–225 form a helical membrane-spanning segment; that stretch reads FGGAVGLCFYLGTTFAAAMYILGAIEILL. Tyr-216 provides a ligand contact to K(+). Topologically, residues 226-248 are extracellular; the sequence is TYIAPPAAIFYPSGAHDTSNATL. Residue Asn-245 is glycosylated (N-linked (GlcNAc...) asparagine). The next 2 membrane-spanning stretches (helical) occupy residues 249–271 and 272–297; these read NNMR…VGVK and YVNK…GGIK. Residues 298-419 lie on the Extracellular side of the membrane; that stretch reads SIFDPPVFPV…LYVVADIATS (122 aa). A disulfide bridge connects residues Cys-308 and Cys-323. N-linked (GlcNAc...) asparagine glycosylation is found at Asn-312, Asn-331, Asn-347, and Asn-361. Cys-343 and Cys-353 are oxidised to a cystine. Residues 420–440 form a helical membrane-spanning segment; sequence FTVLVGIFFPSVTGIMAGSNR. 2 residues coordinate K(+): Pro-429 and Thr-432. Residues Gly-433, Ile-434, and Met-435 each coordinate chloride. Topologically, residues 441–450 are cytoplasmic; it reads SGDLRDAQKS. A helical transmembrane segment spans residues 451 to 473; that stretch reads IPVGTILAIITTSLVYFSSVVLF. Residues 474–504 lie on the Extracellular side of the membrane; the sequence is GACIEGVVLRDKYGDGVSRNLVVGTLAWPSP. Residues 505–531 traverse the membrane as a helical segment; sequence WVIVIGSFFSTCGAGLQSLTGAPRLLQ. The Cytoplasmic portion of the chain corresponds to 532–554; that stretch reads AIAKDNIIPFLRVFGHGKVNGEP. 2 helical membrane-spanning segments follow: residues 555–575 and 576–598; these read TWAL…ASLD and MVAP…ACAV. Residue Tyr-589 participates in chloride binding. Over 599–612 the chain is Cytoplasmic; the sequence is QTLLRTPNWRPRFK. 2 consecutive transmembrane segments (helical) span residues 613–635 and 636–651; these read YYHW…VSSW and YYAL…IYKY. The Cytoplasmic portion of the chain corresponds to 652–1085; it reads IEYQGAEKEW…GGREVITIYS (434 aa). Positions 665–681 are scissor helix; that stretch reads IRGLSLSAARYALLRLE. The ATP site is built by Leu-697, Lys-699, Lys-707, Tyr-708, and Val-730. The residue at position 734 (Ser-734) is a Phosphoserine. Residues Gly-794, Trp-795, and Tyr-797 each contribute to the ATP site. Residues Ser-916 and Ser-967 each carry the phosphoserine modification. The residue at position 983 (Thr-983) is a Phosphothreonine. Phosphoserine is present on Ser-1050.

It belongs to the SLC12A transporter family. K/Cl co-transporter subfamily. As to quaternary structure, homodimer; adopts a domain-swap conformation at the scissor helices connecting the transmembrane domain and C-terminal domain. Heterodimer with other K-Cl cotransporters. Post-translationally, phosphorylated, phosphorylation may regulate transporter activity. As to expression, ubiquitous. Levels are much higher in erythrocytes from patients with Hb SC and Hb SS compared to normal AA erythrocytes. This may contribute to red blood cell dehydration and to the manifestation of sickle cell disease by increasing the intracellular concentration of HbS. Not detected in circulating reticulocytes.

Its subcellular location is the cell membrane. The enzyme catalyses K(+)(in) + chloride(in) = K(+)(out) + chloride(out). Inhibited by WNK3. Its function is as follows. Mediates electroneutral potassium-chloride cotransport when activated by cell swelling. May contribute to cell volume homeostasis in single cells. May be involved in the regulation of basolateral Cl(-) exit in NaCl absorbing epithelia. In terms of biological role, no transporter activity. In Homo sapiens (Human), this protein is Solute carrier family 12 member 4.